The primary structure comprises 111 residues: Large ribosomal subunit protein uL22 (111 aa).

This sequence belongs to the universal ribosomal protein uL22 family. Part of the 50S ribosomal subunit.

Functionally, this protein binds specifically to 23S rRNA; its binding is stimulated by other ribosomal proteins, e.g. L4, L17, and L20. It is important during the early stages of 50S assembly. It makes multiple contacts with different domains of the 23S rRNA in the assembled 50S subunit and ribosome. In terms of biological role, the globular domain of the protein is located near the polypeptide exit tunnel on the outside of the subunit, while an extended beta-hairpin is found that lines the wall of the exit tunnel in the center of the 70S ribosome. The protein is Large ribosomal subunit protein uL22 of Chlamydia abortus (strain DSM 27085 / S26/3) (Chlamydophila abortus).